The following is a 234-amino-acid chain: tRNA (guanine-N(1)-)-methyltransferase (234 aa).

S-adenosyl-L-methionine contacts are provided by residues glycine 112 and 132–137 (IGDFIL).

This sequence belongs to the RNA methyltransferase TrmD family. In terms of assembly, homodimer.

It is found in the cytoplasm. It carries out the reaction guanosine(37) in tRNA + S-adenosyl-L-methionine = N(1)-methylguanosine(37) in tRNA + S-adenosyl-L-homocysteine + H(+). Its function is as follows. Specifically methylates guanosine-37 in various tRNAs. This chain is tRNA (guanine-N(1)-)-methyltransferase, found in Campylobacter jejuni subsp. jejuni serotype O:6 (strain 81116 / NCTC 11828).